A 255-amino-acid polypeptide reads, in one-letter code: MKIRKKKMKLKGKVKKYLMDKLNDNEKLHFSLLDPFKINSSEELKYIAKNLYNVGTDAFLIGGTLGVSKDKLDFVISLLDDYEIPKIIFPSNINLLSEKADALLFLSLLNSDDIYYVIGAQIVAAPIIKMLQMEVIPTAYVIVGHGGTAAHIGKARVIPYDNFELATAYTLAAEYLGMDFVYLEAGSGAPEPIRPEMISFIKKASSIPLIIGGGIRSVEVALKLVEAGANIIVTGNIIERDVDKAIKIIRGIKNK.

The Mg(2+) site is built by Asp34 and Thr64. Residues 182-188 (YLEAGSG), 213-214 (GG), and 235-236 (GN) each bind sn-glycerol 1-phosphate.

It belongs to the GGGP/HepGP synthase family. Group II subfamily. Mg(2+) is required as a cofactor.

It is found in the cytoplasm. It carries out the reaction sn-glycerol 1-phosphate + (2E,6E,10E)-geranylgeranyl diphosphate = sn-3-O-(geranylgeranyl)glycerol 1-phosphate + diphosphate. It participates in membrane lipid metabolism; glycerophospholipid metabolism. Its function is as follows. Prenyltransferase that catalyzes the transfer of the geranylgeranyl moiety of geranylgeranyl diphosphate (GGPP) to the C3 hydroxyl of sn-glycerol-1-phosphate (G1P). This reaction is the first ether-bond-formation step in the biosynthesis of archaeal membrane lipids. This chain is Geranylgeranylglyceryl phosphate synthase, found in Saccharolobus islandicus (strain M.16.27) (Sulfolobus islandicus).